Here is a 274-residue protein sequence, read N- to C-terminus: Dermonecrotic toxin SdSicTox-betaIIB1bx (274 aa).

Histidine 5 is an active-site residue. 2 residues coordinate Mg(2+): glutamate 25 and aspartate 27. The active-site Nucleophile is histidine 41. Cystine bridges form between cysteine 45–cysteine 51 and cysteine 47–cysteine 190. Aspartate 85 is a Mg(2+) binding site.

The protein belongs to the arthropod phospholipase D family. Class II subfamily. Mg(2+) is required as a cofactor. Expressed by the venom gland.

It is found in the secreted. It catalyses the reaction an N-(acyl)-sphingosylphosphocholine = an N-(acyl)-sphingosyl-1,3-cyclic phosphate + choline. It carries out the reaction an N-(acyl)-sphingosylphosphoethanolamine = an N-(acyl)-sphingosyl-1,3-cyclic phosphate + ethanolamine. The enzyme catalyses a 1-acyl-sn-glycero-3-phosphocholine = a 1-acyl-sn-glycero-2,3-cyclic phosphate + choline. The catalysed reaction is a 1-acyl-sn-glycero-3-phosphoethanolamine = a 1-acyl-sn-glycero-2,3-cyclic phosphate + ethanolamine. Dermonecrotic toxins cleave the phosphodiester linkage between the phosphate and headgroup of certain phospholipids (sphingolipid and lysolipid substrates), forming an alcohol (often choline) and a cyclic phosphate. This toxin acts on sphingomyelin (SM). It may also act on ceramide phosphoethanolamine (CPE), lysophosphatidylcholine (LPC) and lysophosphatidylethanolamine (LPE), but not on lysophosphatidylserine (LPS), and lysophosphatidylglycerol (LPG). It acts by transphosphatidylation, releasing exclusively cyclic phosphate products as second products. Induces dermonecrosis, hemolysis, increased vascular permeability, edema, inflammatory response, and platelet aggregation. This chain is Dermonecrotic toxin SdSicTox-betaIIB1bx, found in Sicarius cf. damarensis (strain GJB-2008) (Six-eyed sand spider).